The following is a 388-amino-acid chain: Succinate--CoA ligase [ADP-forming] subunit beta (388 aa).

The region spanning 9–244 (KQLFAEYGLP…PSQDDAREAH (236 aa)) is the ATP-grasp domain. ATP-binding positions include Lys-46, 53–55 (GRG), Glu-99, Thr-102, and Glu-107. Positions 199 and 213 each coordinate Mg(2+). Residues Asn-264 and 321 to 323 (GIV) contribute to the substrate site.

Belongs to the succinate/malate CoA ligase beta subunit family. Heterotetramer of two alpha and two beta subunits. The cofactor is Mg(2+).

It catalyses the reaction succinate + ATP + CoA = succinyl-CoA + ADP + phosphate. The catalysed reaction is GTP + succinate + CoA = succinyl-CoA + GDP + phosphate. It functions in the pathway carbohydrate metabolism; tricarboxylic acid cycle; succinate from succinyl-CoA (ligase route): step 1/1. Succinyl-CoA synthetase functions in the citric acid cycle (TCA), coupling the hydrolysis of succinyl-CoA to the synthesis of either ATP or GTP and thus represents the only step of substrate-level phosphorylation in the TCA. The beta subunit provides nucleotide specificity of the enzyme and binds the substrate succinate, while the binding sites for coenzyme A and phosphate are found in the alpha subunit. The sequence is that of Succinate--CoA ligase [ADP-forming] subunit beta from Pseudomonas paraeruginosa (strain DSM 24068 / PA7) (Pseudomonas aeruginosa (strain PA7)).